Here is a 349-residue protein sequence, read N- to C-terminus: UDP-3-O-acylglucosamine N-acyltransferase (349 aa).

Histidine 242 acts as the Proton acceptor in catalysis.

The protein belongs to the transferase hexapeptide repeat family. LpxD subfamily. As to quaternary structure, homotrimer.

It carries out the reaction a UDP-3-O-[(3R)-3-hydroxyacyl]-alpha-D-glucosamine + a (3R)-hydroxyacyl-[ACP] = a UDP-2-N,3-O-bis[(3R)-3-hydroxyacyl]-alpha-D-glucosamine + holo-[ACP] + H(+). Its pathway is bacterial outer membrane biogenesis; LPS lipid A biosynthesis. In terms of biological role, catalyzes the N-acylation of UDP-3-O-acylglucosamine using 3-hydroxyacyl-ACP as the acyl donor. Is involved in the biosynthesis of lipid A, a phosphorylated glycolipid that anchors the lipopolysaccharide to the outer membrane of the cell. This Cytophaga hutchinsonii (strain ATCC 33406 / DSM 1761 / CIP 103989 / NBRC 15051 / NCIMB 9469 / D465) protein is UDP-3-O-acylglucosamine N-acyltransferase.